A 449-amino-acid chain; its full sequence is Tubulin alpha-1C chain (449 aa).

Positions 1–4 (MREC) match the MREC motif motif. Q11 is a binding site for GTP. K40 bears the N6-acetyllysine mark. E71, S140, G144, T145, T179, N206, and N228 together coordinate GTP. E71 contacts Mg(2+). Residue E254 is part of the active site. Y282 bears the 3'-nitrotyrosine mark. Residues 429-449 (EKDYEEVGADSADGEDEGEEY) form a disordered region. Residues 431–449 (DYEEVGADSADGEDEGEEY) show a composition bias toward acidic residues. Y432 is modified (phosphotyrosine). Position 439 is a phosphoserine (S439). Y449 carries the post-translational modification 3'-nitrotyrosine.

The protein belongs to the tubulin family. Dimer of alpha and beta chains. A typical microtubule is a hollow water-filled tube with an outer diameter of 25 nm and an inner diameter of 15 nM. Alpha-beta heterodimers associate head-to-tail to form protofilaments running lengthwise along the microtubule wall with the beta-tubulin subunit facing the microtubule plus end conferring a structural polarity. Microtubules usually have 13 protofilaments but different protofilament numbers can be found in some organisms and specialized cells. Mg(2+) is required as a cofactor. In terms of processing, some glutamate residues at the C-terminus are polyglutamylated, resulting in polyglutamate chains on the gamma-carboxyl group. Polyglutamylation plays a key role in microtubule severing by spastin (SPAST). SPAST preferentially recognizes and acts on microtubules decorated with short polyglutamate tails: severing activity by SPAST increases as the number of glutamates per tubulin rises from one to eight, but decreases beyond this glutamylation threshold. Glutamylation is also involved in cilia motility. Some glutamate residues at the C-terminus are monoglycylated but not polyglycylated due to the absence of functional TTLL10 in human. Monoglycylation is mainly limited to tubulin incorporated into cilia and flagella axonemes, which is required for their stability and maintenance. Flagella glycylation controls sperm motility. Both polyglutamylation and monoglycylation can coexist on the same protein on adjacent residues, and lowering glycylation levels increases polyglutamylation, and reciprocally. Post-translationally, acetylation of alpha chains at Lys-40 is located inside the microtubule lumen. This modification has been correlated with increased microtubule stability, intracellular transport and ciliary assembly. In terms of processing, methylation of alpha chains at Lys-40 is found in mitotic microtubules and is required for normal mitosis and cytokinesis contributing to genomic stability. Nitration of Tyr-449 is irreversible and interferes with normal dynein intracellular distribution. Post-translationally, undergoes a tyrosination/detyrosination cycle, the cyclic removal and re-addition of a C-terminal tyrosine residue by the enzymes tubulin tyrosine carboxypeptidase (MATCAP1/KIAA0895L, VASH1 or VASH2) and tubulin tyrosine ligase (TTL), respectively. In terms of processing, tyrosination promotes microtubule interaction with CAP-Gly domain-containing proteins such as CLIP1, CLIP2 and DCTN1. Tyrosination regulates the initiation of dynein-dynactin motility via interaction with DCTN1, which brings the dynein-dynactin complex into contact with microtubules. In neurons, tyrosinated tubulins mediate the initiation of retrograde vesicle transport. Detyrosination is involved in metaphase plate congression by guiding chromosomes during mitosis: detyrosination promotes interaction with CENPE, promoting pole-proximal transport of chromosomes toward the equator. Detyrosination increases microtubules-dependent mechanotransduction in dystrophic cardiac and skeletal muscle. In cardiomyocytes, detyrosinated microtubules are required to resist to contractile compression during contraction: detyrosination promotes association with desmin (DES) at force-generating sarcomeres, leading to buckled microtubules and mechanical resistance to contraction.

It localises to the cytoplasm. Its subcellular location is the cytoskeleton. The catalysed reaction is GTP + H2O = GDP + phosphate + H(+). In terms of biological role, tubulin is the major constituent of microtubules, a cylinder consisting of laterally associated linear protofilaments composed of alpha- and beta-tubulin heterodimers. Microtubules grow by the addition of GTP-tubulin dimers to the microtubule end, where a stabilizing cap forms. Below the cap, tubulin dimers are in GDP-bound state, owing to GTPase activity of alpha-tubulin. This is Tubulin alpha-1C chain (TUBA1C) from Homo sapiens (Human).